Consider the following 610-residue polypeptide: Autophagy-related protein 22-1 (610 aa).

A compositionally biased stretch (pro residues) spans 1-11; that stretch reads MAFTPSSPPSP. A disordered region spans residues 1–29; that stretch reads MAFTPSSPPSPAADASQRPSRYPGEDTTP. Residues 35–55 traverse the membrane as a helical segment; the sequence is ILGWYAYGIAAEVFAVCGVGS. An N-linked (GlcNAc...) asparagine glycan is attached at Asn-90. 3 helical membrane passes run 120–140, 152–171, and 189–209; these read SFAM…LISF, TLLL…FVFV, and CLGS…ANDP. The tract at residues 229 to 265 is disordered; that stretch reads GQFEPRDSFSERNPEFESQYTPGIGLGSKPSTNATSP. Over residues 232 to 243 the composition is skewed to basic and acidic residues; sequence EPRDSFSERNPE. N-linked (GlcNAc...) asparagine glycosylation is present at Asn-261. 8 helical membrane passes run 278–298, 310–330, 384–404, 418–438, 453–473, 488–510, 522–544, and 553–573; these read VGLG…LLFA, TLPL…FTMV, VFLV…GTAI, VGCL…LWPV, LCIA…IPLF, FPLA…SFFG, YALY…GMLI, and GFFF…MVNA. Residues 588 to 610 form a disordered region; it reads AKGQESETGEPGEEAEGLLARGA. Residues 594–603 are compositionally biased toward acidic residues; it reads ETGEPGEEAE.

It belongs to the ATG22 family.

It is found in the vacuole membrane. Vacuolar effluxer which mediate the efflux of amino acids resulting from autophagic degradation. The release of autophagic amino acids allows the maintenance of protein synthesis and viability during nitrogen starvation. The chain is Autophagy-related protein 22-1 (atg22-1) from Aspergillus terreus (strain NIH 2624 / FGSC A1156).